The primary structure comprises 217 residues: tRNA (guanine-N(7)-)-methyltransferase (217 aa).

Positions 43, 68, 101, and 123 each coordinate S-adenosyl-L-methionine. Lysine 127 is a substrate binding site. An interaction with RNA region spans residues 129–134 (KHNKRR). Residues aspartate 159 and 196 to 199 (TEYE) each bind substrate.

This sequence belongs to the class I-like SAM-binding methyltransferase superfamily. TrmB family.

The catalysed reaction is guanosine(46) in tRNA + S-adenosyl-L-methionine = N(7)-methylguanosine(46) in tRNA + S-adenosyl-L-homocysteine. It participates in tRNA modification; N(7)-methylguanine-tRNA biosynthesis. In terms of biological role, catalyzes the formation of N(7)-methylguanine at position 46 (m7G46) in tRNA. The sequence is that of tRNA (guanine-N(7)-)-methyltransferase from Clostridium botulinum (strain Okra / Type B1).